The sequence spans 514 residues: H/ACA ribonucleoprotein complex subunit DKC1 (514 aa).

Position 2 is an N-acetylalanine (Ala2). Positions 2–21 (ADAEVIILPKKHKKKKERKS) are nucleolar localization. Residue Lys20 forms a Glycyl lysine isopeptide (Lys-Gly) (interchain with G-Cter in SUMO2) linkage. Ser21 carries the phosphoserine modification. Glycyl lysine isopeptide (Lys-Gly) (interchain with G-Cter in SUMO2) cross-links involve residues Lys39 and Lys43. The active-site Nucleophile is Asp125. Lys191 participates in a covalent cross-link: Glycyl lysine isopeptide (Lys-Gly) (interchain with G-Cter in SUMO2). The region spanning 296 to 371 (HKRLVMKDSA…IVAKIKRVIM (76 aa)) is the PUA domain. Ser387 carries the phosphoserine modification. Lys394 is covalently cross-linked (Glycyl lysine isopeptide (Lys-Gly) (interchain with G-Cter in SUMO2)). Lys413 participates in a covalent cross-link: Glycyl lysine isopeptide (Lys-Gly) (interchain with G-Cter in SUMO1); alternate. Lys413 is covalently cross-linked (Glycyl lysine isopeptide (Lys-Gly) (interchain with G-Cter in SUMO2); alternate). Residues Lys424 and Lys433 each participate in a glycyl lysine isopeptide (Lys-Gly) (interchain with G-Cter in SUMO2) cross-link. The segment at 443-514 (KTAKRKRESE…KAKEVELVSE (72 aa)) is disordered. The interval 446-514 (KRKRESESES…KAKEVELVSE (69 aa)) is nuclear and nucleolar localization. Residues Ser451, Ser453, and Ser455 each carry the phosphoserine modification. Thr458 is modified (phosphothreonine). Residue Lys467 forms a Glycyl lysine isopeptide (Lys-Gly) (interchain with G-Cter in SUMO2) linkage. Positions 468-480 (KEKKKSKKDKKAK) are enriched in basic residues. Phosphoserine is present on residues Ser485, Ser494, and Ser513.

This sequence belongs to the pseudouridine synthase TruB family. As to quaternary structure, part of the H/ACA small nucleolar ribonucleoprotein (H/ACA snoRNP) complex, which contains NHP2/NOLA2, GAR1/NOLA1, NOP10/NOLA3, and DKC1/NOLA4, which is presumed to be the catalytic subunit. The complex contains a stable core formed by binding of one or two NOP10-DKC1 heterodimers to NHP2; GAR1 subsequently binds to this core via DKC1. The complex binds a box H/ACA small nucleolar RNA (snoRNA), which may target the specific site of modification within the RNA substrate. During assembly, the complex contains NAF1 instead of GAR1/NOLA1. The complex also interacts with TERC, which contains a 3'-terminal domain related to the box H/ACA snoRNAs. Specific interactions with snoRNAs or TERC are mediated by GAR1 and NHP2. Associates with NOLC1/NOPP140. H/ACA snoRNPs interact with the SMN complex, consisting of SMN1 or SMN2, GEMIN2/SIP1, DDX20/GEMIN3, and GEMIN4. This is mediated by interaction between GAR1 and SMN1 or SMN2. The SMN complex may be required for correct assembly of the H/ACA snoRNP complex. Component of the telomerase holoenzyme complex composed of one molecule of TERT, one molecule of WRAP53/TCAB1, two molecules of H/ACA ribonucleoprotein complex subunits DKC1, NOP10, NHP2 and GAR1, and a telomerase RNA template component (TERC). The telomerase holoenzyme complex is associated with TEP1, SMG6/EST1A and POT1. Interacts with SHQ1; this interaction may lead to the stabilization of DKC1, from the time of its synthesis until its association with NOP10, NHP2, and NAF1 at the nascent H/ACA RNA. Interacts with HMBOX1. Interacts with DHX36. Ubiquitously expressed.

It localises to the nucleus. The protein localises to the nucleolus. The protein resides in the cajal body. It is found in the cytoplasm. The catalysed reaction is uridine in 5S rRNA = pseudouridine in 5S rRNA. Functionally, catalytic subunit of H/ACA small nucleolar ribonucleoprotein (H/ACA snoRNP) complex, which catalyzes pseudouridylation of rRNA. This involves the isomerization of uridine such that the ribose is subsequently attached to C5, instead of the normal N1. Each rRNA can contain up to 100 pseudouridine ('psi') residues, which may serve to stabilize the conformation of rRNAs. Required for ribosome biogenesis and telomere maintenance. Also required for correct processing or intranuclear trafficking of TERC, the RNA component of the telomerase reverse transcriptase (TERT) holoenzyme. Its function is as follows. Promotes cell to cell and cell to substratum adhesion, increases the cell proliferation rate and leads to cytokeratin hyper-expression. This Homo sapiens (Human) protein is H/ACA ribonucleoprotein complex subunit DKC1.